We begin with the raw amino-acid sequence, 150 residues long: 3-hydroxyacyl-[acyl-carrier-protein] dehydratase FabZ (150 aa).

Residue His-54 is part of the active site.

It belongs to the thioester dehydratase family. FabZ subfamily.

The protein resides in the cytoplasm. It catalyses the reaction a (3R)-hydroxyacyl-[ACP] = a (2E)-enoyl-[ACP] + H2O. Its function is as follows. Involved in unsaturated fatty acids biosynthesis. Catalyzes the dehydration of short chain beta-hydroxyacyl-ACPs and long chain saturated and unsaturated beta-hydroxyacyl-ACPs. The sequence is that of 3-hydroxyacyl-[acyl-carrier-protein] dehydratase FabZ from Pseudoalteromonas translucida (strain TAC 125).